The chain runs to 402 residues: DNA primase DnaG (402 aa).

Residues Pro165 to Val243 enclose the Toprim domain. Residues Glu171, Asp216, and Asp218 each contribute to the Mg(2+) site.

The protein belongs to the archaeal DnaG primase family. Forms a ternary complex with MCM helicase and DNA. Component of the archaeal exosome complex. Mg(2+) serves as cofactor.

The enzyme catalyses ssDNA + n NTP = ssDNA/pppN(pN)n-1 hybrid + (n-1) diphosphate.. Its function is as follows. RNA polymerase that catalyzes the synthesis of short RNA molecules used as primers for DNA polymerase during DNA replication. Also part of the exosome, which is a complex involved in RNA degradation. Acts as a poly(A)-binding protein that enhances the interaction between heteromeric, adenine-rich transcripts and the exosome. In Saccharolobus islandicus (strain Y.N.15.51 / Yellowstone #2) (Sulfolobus islandicus), this protein is DNA primase DnaG.